We begin with the raw amino-acid sequence, 642 residues long: Mini-chromosome maintenance complex-binding protein (642 aa).

Residues 151-161 (ARVSPSTSYTP) are compositionally biased toward polar residues. The tract at residues 151 to 188 (ARVSPSTSYTPSRHKRSYEDDEDMDLQPNKQKDQHMGA) is disordered. Ser-154 carries the post-translational modification Phosphoserine. Thr-160 is subject to Phosphothreonine. Ser-167 and Ser-298 each carry phosphoserine.

This sequence belongs to the MCMBP family. In terms of assembly, interacts with the MCM complex: associates with the MCM3-7 complex which lacks MCM2, while it does not interact with the MCM complex when MCM2 is present (MCM2-7 complex). Interacts with the RPA complex, when composed of all RPA1, RPA2 and RPA3 components, but not with RPA1 or RPA2 alone.

The protein resides in the nucleus. Its function is as follows. Associated component of the MCM complex that acts as a regulator of DNA replication. Binds to the MCM complex during late S phase and promotes the disassembly of the MCM complex from chromatin, thereby acting as a key regulator of pre-replication complex (pre-RC) unloading from replicated DNA. Can dissociate the MCM complex without addition of ATP; probably acts by destabilizing interactions of each individual subunits of the MCM complex. Required for sister chromatid cohesion. The sequence is that of Mini-chromosome maintenance complex-binding protein (MCMBP) from Bos taurus (Bovine).